Reading from the N-terminus, the 419-residue chain is D-mannonate dehydratase (419 aa).

The substrate site is built by N54 and H139. Residue Y176 is the Proton donor/acceptor of the active site. Mg(2+) is bound at residue D227. The active-site Proton donor/acceptor is the H229. Residues E253 and E279 each contribute to the Mg(2+) site. Substrate is bound by residues E279, R300, H329, D333, and E356.

Belongs to the mandelate racemase/muconate lactonizing enzyme family. GalD subfamily. The cofactor is Mg(2+).

It catalyses the reaction D-mannonate = 2-dehydro-3-deoxy-D-gluconate + H2O. The protein operates within carbohydrate metabolism; pentose and glucuronate interconversion. Functionally, catalyzes the dehydration of D-mannonate. Has no detectable activity with a panel of 70 other acid sugars (in vitro). The protein is D-mannonate dehydratase of Xanthomonas oryzae pv. oryzicola (strain BLS256).